The sequence spans 360 residues: Phospho-N-acetylmuramoyl-pentapeptide-transferase (360 aa).

The next 10 membrane-spanning stretches (helical) occupy residues 27–47, 71–91, 93–113, 128–148, 168–188, 199–219, 239–259, 262–282, 288–308, and 337–357; these read GAMI…INSL, TPTM…LLWA, LASV…AIGF, FSGK…AFTI, LVIN…VGAG, GLAI…AYLS, LAVV…FNAP, AIFM…TVAV, IVLA…IIQV, and QVVI…LSTL.

This sequence belongs to the glycosyltransferase 4 family. MraY subfamily. Requires Mg(2+) as cofactor.

The protein resides in the cell inner membrane. It carries out the reaction UDP-N-acetyl-alpha-D-muramoyl-L-alanyl-gamma-D-glutamyl-meso-2,6-diaminopimeloyl-D-alanyl-D-alanine + di-trans,octa-cis-undecaprenyl phosphate = di-trans,octa-cis-undecaprenyl diphospho-N-acetyl-alpha-D-muramoyl-L-alanyl-D-glutamyl-meso-2,6-diaminopimeloyl-D-alanyl-D-alanine + UMP. The protein operates within cell wall biogenesis; peptidoglycan biosynthesis. Functionally, catalyzes the initial step of the lipid cycle reactions in the biosynthesis of the cell wall peptidoglycan: transfers peptidoglycan precursor phospho-MurNAc-pentapeptide from UDP-MurNAc-pentapeptide onto the lipid carrier undecaprenyl phosphate, yielding undecaprenyl-pyrophosphoryl-MurNAc-pentapeptide, known as lipid I. This Brucella ovis (strain ATCC 25840 / 63/290 / NCTC 10512) protein is Phospho-N-acetylmuramoyl-pentapeptide-transferase.